Here is a 390-residue protein sequence, read N- to C-terminus: Phosphopentomutase (390 aa).

Residues Asp-14, Asp-286, His-291, Asp-327, His-328, and His-339 each coordinate Mn(2+).

Belongs to the phosphopentomutase family. Requires Mn(2+) as cofactor.

It localises to the cytoplasm. It carries out the reaction 2-deoxy-alpha-D-ribose 1-phosphate = 2-deoxy-D-ribose 5-phosphate. The catalysed reaction is alpha-D-ribose 1-phosphate = D-ribose 5-phosphate. It participates in carbohydrate degradation; 2-deoxy-D-ribose 1-phosphate degradation; D-glyceraldehyde 3-phosphate and acetaldehyde from 2-deoxy-alpha-D-ribose 1-phosphate: step 1/2. Isomerase that catalyzes the conversion of deoxy-ribose 1-phosphate (dRib-1-P) and ribose 1-phosphate (Rib-1-P) to deoxy-ribose 5-phosphate (dRib-5-P) and ribose 5-phosphate (Rib-5-P), respectively. This is Phosphopentomutase from Exiguobacterium sibiricum (strain DSM 17290 / CCUG 55495 / CIP 109462 / JCM 13490 / 255-15).